A 356-amino-acid polypeptide reads, in one-letter code: TPR repeat-containing protein P27G11.02 (356 aa).

The transit peptide at 1–20 (MRMQWIWKSRRSLQNVFIRR) directs the protein to the mitochondrion. 2 TPR repeats span residues 194–227 (SRLF…TMAN) and 290–323 (AAAF…RKDD).

Its subcellular location is the mitochondrion. The chain is TPR repeat-containing protein P27G11.02 from Schizosaccharomyces pombe (strain 972 / ATCC 24843) (Fission yeast).